Reading from the N-terminus, the 487-residue chain is GTPase Der (487 aa).

EngA-type G domains are found at residues 3–167 and 203–378; these read LTLA…DEME and LQVA…EVWN. GTP-binding positions include 9–16, 56–60, and 119–122; these read GRPNVGKS, DTAGL, and NKAE. Residues 167–190 show a composition bias toward acidic residues; sequence EQQAEEQAPETDVDLDPEDEDGEE. The disordered stretch occupies residues 167–191; that stretch reads EQQAEEQAPETDVDLDPEDEDGEEV. GTP contacts are provided by residues 209–216, 256–260, and 321–324; these read GRPNAGKS, DTAGM, and NKWD. The KH-like domain maps to 379–465; it reads RRIPTAALNR…RLTLRGQGDK (87 aa). Residues 458–487 are disordered; that stretch reads TLRGQGDKNPYKGRRKKNAGALAKHLKSRG. Residues 468-487 show a composition bias toward basic residues; sequence YKGRRKKNAGALAKHLKSRG.

The protein belongs to the TRAFAC class TrmE-Era-EngA-EngB-Septin-like GTPase superfamily. EngA (Der) GTPase family. As to quaternary structure, associates with the 50S ribosomal subunit.

Its function is as follows. GTPase that plays an essential role in the late steps of ribosome biogenesis. The chain is GTPase Der from Ruegeria pomeroyi (strain ATCC 700808 / DSM 15171 / DSS-3) (Silicibacter pomeroyi).